Reading from the N-terminus, the 303-residue chain is N-acetyl-D-glucosamine kinase (303 aa).

Residues 4–11 (GFDIGGTK) and 133–140 (GVGGGLIF) contribute to the ATP site. Residues histidine 157, cysteine 177, cysteine 179, and cysteine 184 each coordinate Zn(2+).

Belongs to the ROK (NagC/XylR) family. NagK subfamily.

The enzyme catalyses N-acetyl-D-glucosamine + ATP = N-acetyl-D-glucosamine 6-phosphate + ADP + H(+). The protein operates within cell wall biogenesis; peptidoglycan recycling. Catalyzes the phosphorylation of N-acetyl-D-glucosamine (GlcNAc) derived from cell-wall degradation, yielding GlcNAc-6-P. The polypeptide is N-acetyl-D-glucosamine kinase (Escherichia fergusonii (strain ATCC 35469 / DSM 13698 / CCUG 18766 / IAM 14443 / JCM 21226 / LMG 7866 / NBRC 102419 / NCTC 12128 / CDC 0568-73)).